A 390-amino-acid polypeptide reads, in one-letter code: Queuine tRNA-ribosyltransferase (390 aa).

Residue Asp92 is the Proton acceptor of the active site. Substrate is bound by residues 92 to 96 (DSGGF), Asp146, Gln195, and Gly222. An RNA binding region spans residues 253–259 (GVGTPED). The Nucleophile role is filled by Asp272. The RNA binding; important for wobble base 34 recognition stretch occupies residues 277 to 281 (TRNAR). Zn(2+) is bound by residues Cys310, Cys312, Cys315, and His354.

Belongs to the queuine tRNA-ribosyltransferase family. Homodimer. Within each dimer, one monomer is responsible for RNA recognition and catalysis, while the other monomer binds to the replacement base PreQ1. It depends on Zn(2+) as a cofactor.

It catalyses the reaction 7-aminomethyl-7-carbaguanine + guanosine(34) in tRNA = 7-aminomethyl-7-carbaguanosine(34) in tRNA + guanine. Its pathway is tRNA modification; tRNA-queuosine biosynthesis. In terms of biological role, catalyzes the base-exchange of a guanine (G) residue with the queuine precursor 7-aminomethyl-7-deazaguanine (PreQ1) at position 34 (anticodon wobble position) in tRNAs with GU(N) anticodons (tRNA-Asp, -Asn, -His and -Tyr). Catalysis occurs through a double-displacement mechanism. The nucleophile active site attacks the C1' of nucleotide 34 to detach the guanine base from the RNA, forming a covalent enzyme-RNA intermediate. The proton acceptor active site deprotonates the incoming PreQ1, allowing a nucleophilic attack on the C1' of the ribose to form the product. After dissociation, two additional enzymatic reactions on the tRNA convert PreQ1 to queuine (Q), resulting in the hypermodified nucleoside queuosine (7-(((4,5-cis-dihydroxy-2-cyclopenten-1-yl)amino)methyl)-7-deazaguanosine). The protein is Queuine tRNA-ribosyltransferase of Acidovorax sp. (strain JS42).